Here is a 323-residue protein sequence, read N- to C-terminus: Mitochondrial glutamate carrier 1 (323 aa).

Solcar repeat units lie at residues 6 to 93 (ISLP…FRHQ), 101 to 214 (LTLL…LNQL), and 223 to 312 (SPFY…GIAE). A run of 6 helical transmembrane segments spans residues 12–32 (LING…IDLA), 62–82 (YFGM…EKAI), 107–127 (MLAG…MEML), 189–209 (GLGA…PLFA), 223–243 (SPFY…AVAV), and 292–312 (ALVI…GIAE).

This sequence belongs to the mitochondrial carrier (TC 2.A.29) family. Expressed at high levels in brain, liver, and pancreas.

The protein resides in the mitochondrion inner membrane. The catalysed reaction is L-glutamate(in) + H(+)(in) = L-glutamate(out) + H(+)(out). Functionally, mitochondrial glutamate/H(+) symporter. Responsible for the transport of glutamate from the cytosol into the mitochondrial matrix with the concomitant import of a proton. Plays a role in the control of glucose-stimulated insulin secretion. The chain is Mitochondrial glutamate carrier 1 from Homo sapiens (Human).